Reading from the N-terminus, the 664-residue chain is Threonine--tRNA ligase (664 aa).

The TGS domain occupies 1–64 (MSELLKITLP…TADAQLALVT (64 aa)). Positions 250-559 (DHRKLGNEMD…LIEHFAGRLP (310 aa)) are catalytic. Residues C355, H406, and H536 each coordinate Zn(2+).

The protein belongs to the class-II aminoacyl-tRNA synthetase family. Homodimer. Zn(2+) is required as a cofactor.

Its subcellular location is the cytoplasm. It carries out the reaction tRNA(Thr) + L-threonine + ATP = L-threonyl-tRNA(Thr) + AMP + diphosphate + H(+). Its function is as follows. Catalyzes the attachment of threonine to tRNA(Thr) in a two-step reaction: L-threonine is first activated by ATP to form Thr-AMP and then transferred to the acceptor end of tRNA(Thr). Also edits incorrectly charged L-seryl-tRNA(Thr). This Novosphingobium aromaticivorans (strain ATCC 700278 / DSM 12444 / CCUG 56034 / CIP 105152 / NBRC 16084 / F199) protein is Threonine--tRNA ligase.